The chain runs to 509 residues: uncharacterized protein (509 aa).

An N-terminal signal peptide occupies residues 1-32 (MMLPKRNIIHFLRKRAIFIVAAFIALLTVDYS).

The protein resides in the endoplasmic reticulum. This is an uncharacterized protein from Schizosaccharomyces pombe (strain 972 / ATCC 24843) (Fission yeast).